We begin with the raw amino-acid sequence, 470 residues long: Poly(A) polymerase catalytic subunit (470 aa).

Catalysis depends on residues Asp192 and Asp194.

This sequence belongs to the poxviridae poly(A) polymerase catalytic subunit family. Heterodimer of a large (catalytic) subunit and a small (regulatory) subunit.

The enzyme catalyses RNA(n) + ATP = RNA(n)-3'-adenine ribonucleotide + diphosphate. Functionally, polymerase that creates the 3'-poly(A) tail of mRNA's. The polypeptide is Poly(A) polymerase catalytic subunit (PAPL) (Myxoma virus (strain Lausanne) (MYXV)).